A 237-amino-acid chain; its full sequence is Undecaprenyl-diphosphatase (237 aa).

The next 7 membrane-spanning stretches (helical) occupy residues 38–58 (QTAVLHLGTLVSVVLFAFDGI), 65–85 (WRIILNLIVSTIPAGVFGVLF), 92–112 (LFSSPRFLPLFFSVTALILMF), 126–146 (MSFLDALLVGIAQLFALFPGI), 166–186 (ALQYSFLMSIPVVLGAGILGL), 191–211 (ITILAPIFAFLSGLFALYVLS), and 217–237 (GKIWQFSYYCLFVAILSYLVG).

The protein belongs to the UppP family.

It is found in the cell inner membrane. The catalysed reaction is di-trans,octa-cis-undecaprenyl diphosphate + H2O = di-trans,octa-cis-undecaprenyl phosphate + phosphate + H(+). Catalyzes the dephosphorylation of undecaprenyl diphosphate (UPP). Confers resistance to bacitracin. In Thermotoga petrophila (strain ATCC BAA-488 / DSM 13995 / JCM 10881 / RKU-1), this protein is Undecaprenyl-diphosphatase.